The sequence spans 255 residues: Coniferyl-alcohol dehydrogenase (255 aa).

NAD(+)-binding positions include 12–17, aspartate 36, 51–52, and glycine 77; these read GVSSGI and DL. Serine 117 is a binding site for substrate. Residues tyrosine 157 and lysine 161 each coordinate NAD(+). Catalysis depends on tyrosine 157, which acts as the Proton acceptor.

This sequence belongs to the short-chain dehydrogenases/reductases (SDR) family.

It carries out the reaction (E)-coniferol + NADP(+) = (E)-coniferaldehyde + NADPH + H(+). Its function is as follows. Catalyzes the conversion of coniferyl alcohol into coniferyl aldehyde in the eugenol degradation pathway. Specific for coniferyl alcohol; does not act on cinnamyl alcohol, 4-coumaryl alcohol or sinapyl alcohol. The protein is Coniferyl-alcohol dehydrogenase (calA) of Pseudomonas sp. (strain HR199 / DSM 7063).